We begin with the raw amino-acid sequence, 119 residues long: Beta-2-microglobulin (119 aa).

An N-terminal signal peptide occupies residues 1-20; the sequence is MARSVVVSLFVLLALAGLEA. Residues 25–114 form the Ig-like C1-type domain; that stretch reads PKIQVYSRHP…VTFQTPKTVK (90 aa).

It belongs to the beta-2-microglobulin family. In terms of assembly, heterodimer of an alpha chain and a beta chain. Beta-2-microglobulin is the beta-chain of major histocompatibility complex class I molecules.

The protein resides in the secreted. Functionally, component of the class I major histocompatibility complex (MHC). Involved in the presentation of peptide antigens to the immune system. The protein is Beta-2-microglobulin (B2M) of Brachyteles arachnoides (Southern muriqui).